We begin with the raw amino-acid sequence, 431 residues long: Shaggy-related protein kinase beta (431 aa).

Residues 12–24 are compositionally biased toward polar residues; sequence SGRNFVSSDNVGE. A disordered region spans residues 12 to 65; the sequence is SGRNFVSSDNVGETETPRSKPNQNREETESTETTSYEKDSVSSSENSDHLPKEI. Composition is skewed to basic and acidic residues over residues 26–39 and 46–65; these read ETPR…REET and SYEK…PKEI. One can recognise a Protein kinase domain in the interval 102–386; that stretch reads YRAEHVIGTG…ALEACAHPFF (285 aa). ATP contacts are provided by residues 108 to 116 and Lys-131; that span reads IGTGSFGVV. Asp-227 (proton acceptor) is an active-site residue. The residue at position 262 (Tyr-262) is a Phosphotyrosine.

Belongs to the protein kinase superfamily. CMGC Ser/Thr protein kinase family. GSK-3 subfamily. In terms of processing, autophosphorylated mainly on threonine and serine residues.

The catalysed reaction is L-seryl-[protein] + ATP = O-phospho-L-seryl-[protein] + ADP + H(+). The enzyme catalyses L-threonyl-[protein] + ATP = O-phospho-L-threonyl-[protein] + ADP + H(+). Functionally, may mediate extracellular signals to regulate transcription in differentiating cells. The chain is Shaggy-related protein kinase beta from Arabidopsis thaliana (Mouse-ear cress).